The chain runs to 349 residues: Dihydroorotate dehydrogenase (quinone) (349 aa).

FMN contacts are provided by residues 59–63 and Thr-83; that span reads PGFDK. A substrate-binding site is contributed by Lys-63. 108 to 112 is a binding site for substrate; the sequence is NRMGF. Residues Asn-142 and Asn-173 each coordinate FMN. Asn-173 is a substrate binding site. The Nucleophile role is filled by Ser-176. Asn-178 serves as a coordination point for substrate. Residues Lys-212 and Ser-240 each contribute to the FMN site. Residue 241-242 participates in substrate binding; it reads NT. FMN is bound by residues Gly-262, Gly-291, and 312-313; that span reads YS.

The protein belongs to the dihydroorotate dehydrogenase family. Type 2 subfamily. Monomer. It depends on FMN as a cofactor.

It localises to the cell membrane. It catalyses the reaction (S)-dihydroorotate + a quinone = orotate + a quinol. Its pathway is pyrimidine metabolism; UMP biosynthesis via de novo pathway; orotate from (S)-dihydroorotate (quinone route): step 1/1. Its function is as follows. Catalyzes the conversion of dihydroorotate to orotate with quinone as electron acceptor. This chain is Dihydroorotate dehydrogenase (quinone), found in Novosphingobium aromaticivorans (strain ATCC 700278 / DSM 12444 / CCUG 56034 / CIP 105152 / NBRC 16084 / F199).